The sequence spans 363 residues: NAD(P)H-quinone oxidoreductase subunit 1, chloroplastic (363 aa).

The next 6 membrane-spanning stretches (helical) occupy residues 27–47, 104–124, 127–147, 248–268, 300–320, and 343–363; these read VWLL…VLVI, IAVI…HLVL, LSIG…GLLM, YSGI…LVSS, VFGM…FLFI, and FLLP…LFSL.

This sequence belongs to the complex I subunit 1 family. As to quaternary structure, NDH is composed of at least 16 different subunits, 5 of which are encoded in the nucleus.

The protein localises to the plastid. Its subcellular location is the chloroplast thylakoid membrane. The enzyme catalyses a plastoquinone + NADH + (n+1) H(+)(in) = a plastoquinol + NAD(+) + n H(+)(out). The catalysed reaction is a plastoquinone + NADPH + (n+1) H(+)(in) = a plastoquinol + NADP(+) + n H(+)(out). NDH shuttles electrons from NAD(P)H:plastoquinone, via FMN and iron-sulfur (Fe-S) centers, to quinones in the photosynthetic chain and possibly in a chloroplast respiratory chain. The immediate electron acceptor for the enzyme in this species is believed to be plastoquinone. Couples the redox reaction to proton translocation, and thus conserves the redox energy in a proton gradient. The sequence is that of NAD(P)H-quinone oxidoreductase subunit 1, chloroplastic from Ranunculus macranthus (Large buttercup).